Reading from the N-terminus, the 763-residue chain is Phosphoglycerol transferase I (763 aa).

A run of 4 helical transmembrane segments spans residues 1–21 (MSEL…AWKA), 26–46 (WWFA…ITLY), 77–97 (ILPG…LGWV), and 108–128 (VGYS…SPAF).

The protein belongs to the OpgB family.

Its subcellular location is the cell inner membrane. The enzyme catalyses a phosphatidylglycerol + a membrane-derived-oligosaccharide D-glucose = a 1,2-diacyl-sn-glycerol + a membrane-derived-oligosaccharide 6-(glycerophospho)-D-glucose.. It participates in glycan metabolism; osmoregulated periplasmic glucan (OPG) biosynthesis. In terms of biological role, transfers a phosphoglycerol residue from phosphatidylglycerol to the membrane-bound nascent glucan backbones. In Salmonella heidelberg (strain SL476), this protein is Phosphoglycerol transferase I.